The following is a 123-amino-acid chain: Cyclic ether formation enzyme xenC (123 aa).

A signal peptide spans 1–24; the sequence is MSSLLLSDVLSYGIFGFSALCVQA. 2 consecutive transmembrane segments (helical) span residues 58–78 and 102–122; these read SALR…LWSP and LGES…AILV.

The protein belongs to the cyclic ether formation enzyme xenC family.

Its subcellular location is the membrane. It functions in the pathway mycotoxin biosynthesis. Its function is as follows. Cyclic ether formation enzyme; part of the gene cluster that mediates the biosynthesis of xenoacremones such as xenoacremone A, a compound that shows inhibitory activity toward the PI3K/AKT signaling pathway and which has the ability to induce apoptosis of A549 lung cancer cells. Within the pathway, cooperation of the hybrid PKS-NRPS xenE and the trans-acting enoyl reductase xenG is responsible for the formation of the reduced tyrosine-nonaketide derivative. The alpha/beta hydrolase xenA then accelerates intramolecular nucleophilic attack to give a pyrrolidone derivative. Subsequently, three enzymes, xenF, xenD, and xenC, coordinately participate in the conversion to xenoacremone B. XenF catalyzes sigmatropic rearrangement to form an A-ring, which leads to an unusual intermediate with a hexane ring, which is required for the formation of the tricarbocyclic product. Epoxidation catalyzed by xenD and the formation of the paracyclophane ether catalyzed by xenC initiate a spontaneous intramolecular Diels-Alder (IMDA) reaction to yield xenoacremone B. Spontaneous hydration of xenoacremone B leads to the formation of xenoacremone A, which undergoes subsequent methylation to afford xenoacremone C. This is Cyclic ether formation enzyme xenC from Xenoacremonium sinensis (Endophyte fungus).